The chain runs to 467 residues: Argininosuccinate lyase 1 (467 aa).

The protein belongs to the lyase 1 family. Argininosuccinate lyase subfamily.

It localises to the cytoplasm. It carries out the reaction 2-(N(omega)-L-arginino)succinate = fumarate + L-arginine. It functions in the pathway amino-acid biosynthesis; L-arginine biosynthesis; L-arginine from L-ornithine and carbamoyl phosphate: step 3/3. This is Argininosuccinate lyase 1 from Rhizobium meliloti (strain 1021) (Ensifer meliloti).